The primary structure comprises 385 residues: tRNA-specific 2-thiouridylase MnmA (385 aa).

Residues 29 to 36 (GLSGGVDS) and L55 each bind ATP. Catalysis depends on C116, which acts as the Nucleophile. Residues C116 and C225 are joined by a disulfide bond. Residue G141 coordinates ATP. The tract at residues 175–177 (KDQ) is interaction with tRNA. Catalysis depends on C225, which acts as the Cysteine persulfide intermediate. An interaction with tRNA region spans residues 330 to 331 (RY).

Belongs to the MnmA/TRMU family.

The protein localises to the cytoplasm. It catalyses the reaction S-sulfanyl-L-cysteinyl-[protein] + uridine(34) in tRNA + AH2 + ATP = 2-thiouridine(34) in tRNA + L-cysteinyl-[protein] + A + AMP + diphosphate + H(+). In terms of biological role, catalyzes the 2-thiolation of uridine at the wobble position (U34) of tRNA, leading to the formation of s(2)U34. This Prochlorococcus marinus (strain AS9601) protein is tRNA-specific 2-thiouridylase MnmA.